The primary structure comprises 500 residues: Maturase K (500 aa).

It belongs to the intron maturase 2 family. MatK subfamily.

Its subcellular location is the plastid. The protein resides in the chloroplast. Its function is as follows. Usually encoded in the trnK tRNA gene intron. Probably assists in splicing its own and other chloroplast group II introns. In Prunus laurocerasus (Cherry laurel), this protein is Maturase K.